The following is a 217-amino-acid chain: Small ribosomal subunit protein uS3 (217 aa).

A KH type-2 domain is found at 40 to 110; sequence IRDLINKGFN…EVYINIHEVR (71 aa).

The protein belongs to the universal ribosomal protein uS3 family. Part of the 30S ribosomal subunit. Forms a tight complex with proteins S10 and S14.

Binds the lower part of the 30S subunit head. Binds mRNA in the 70S ribosome, positioning it for translation. The sequence is that of Small ribosomal subunit protein uS3 from Rickettsia akari (strain Hartford).